The sequence spans 679 residues: MSKIRVYELAKELRVPSKVLINVLMDEFGVEVKNHMSVIEDEDAALIKELLAGSEANSELVAEYEAELAEEVNNAAKKKKKRKKGSEDDNLEQDVEVIEIGKTITVKELAEKLNKPVNDVIKTLIFTGVMAAINQEIDFETAEKVAEKYEVAVYEKEEENTLEEFEEETDVEEENLAKRPPIITVMGHVDHGKTSLLDAIRKSKVTSTEAGGITQHIGAYTVEVNGETLTFLDTPGHEAFTAMRARGAQITDVVILVVAADDGIMPQTVEAINHCKAANVPMIVAINKMDREGANPDRVKQELTEHGLVVEDWGGDIIAVPVSAKTRENIDTLLEMVLLTSEMQELKADAGRKAKGTVVEAKLDKGRGAVATLLVQNGTLHMGDSIIVGSTYGRIRAMFDDSGKKIKSAGPSIPVEVLGLSEVPAAGDRFTVVKDEKTARNMAEARKEKIRQESFATSHRVSLEDLYSQIKEGSVKELSVIVKADVQGSVEAIKASLEKLSTDDVKVRVIHGAVGAISETDITLAAASNAIVIGFNVRPDNNAVAASERDGVEVKTYRVIYDAIEDIKSAMIGMLDPEYKEVVLGTAEIRATYKISNVGTIAGGYVLTGKLVRNADVRVIREGIVIFESKLASLKRFKDDVKEVNAGYECGFSVEKFNDIKEGDIIEAYTMEAVQRKEL.

A tr-type G domain is found at 178-347; it reads KRPPIITVMG…LLTSEMQELK (170 aa). Residues 187-194 form a G1 region; the sequence is GHVDHGKT. 187–194 contacts GTP; sequence GHVDHGKT. The tract at residues 212 to 216 is G2; it reads GITQH. Positions 233-236 are G3; it reads DTPG. Residues 233 to 237 and 287 to 290 contribute to the GTP site; these read DTPGH and NKMD. The tract at residues 287–290 is G4; the sequence is NKMD. A G5 region spans residues 323-325; sequence SAK.

The protein belongs to the TRAFAC class translation factor GTPase superfamily. Classic translation factor GTPase family. IF-2 subfamily.

The protein resides in the cytoplasm. In terms of biological role, one of the essential components for the initiation of protein synthesis. Protects formylmethionyl-tRNA from spontaneous hydrolysis and promotes its binding to the 30S ribosomal subunits. Also involved in the hydrolysis of GTP during the formation of the 70S ribosomal complex. In Clostridium perfringens (strain ATCC 13124 / DSM 756 / JCM 1290 / NCIMB 6125 / NCTC 8237 / Type A), this protein is Translation initiation factor IF-2.